The following is a 216-amino-acid chain: MDNTSKINKITKIEVQKRNKKRVNLYINDEYAMAFSTELAFKHNLKIGQEVDYKELKVIAEEDNYIKCKGDALKFIEKSYKTERQVYDKLLSKGYDNKTIERVIDFLTEYKFIDDWRFGELYIEERLKREGRNKIKYSLMQKGISESIIDEKLNCVDRDKEKDALNKIAEKKYKSILKNEEDKTKIYNKLGRFLMSKGYLWEDVKSVLNKLLYSDG.

This sequence belongs to the RecX family.

The protein localises to the cytoplasm. Functionally, modulates RecA activity. The polypeptide is Regulatory protein RecX (Clostridium tetani (strain Massachusetts / E88)).